We begin with the raw amino-acid sequence, 498 residues long: MRTNSTTSGPGVPTLEKKNLGRIAQIIGPVLDVAFPPGKMPNIYNALIVTGQDTTGQPINVTCEVQQLLGNNRVRAVAMSATDGLMRGMEVIDTGAPLSVPVGGATLGRIFNVLGEPVDNLGPVDTRTTSPIHRSAPAFTQLDTKLSIFETGIKVVDLLAPYRRGGKIGLFGGAGVGKTVLIMELINNIAKAHGGVSVFGGVGERTREGNDLYMEMKESGVINEQNIAESKVALVYGQMNEPPGARMRVGLTALTMAEYFRDVNEQDVLLFIDNILRFVQAGSEVSALLGRMPSAVGYQPTLSTEMGSLQERITSTKEGSITSIQAVYVPADDLTDPAPATTFAHLDATTVLSRGLAAKGIYPAVDPLDSTSTMLQPRIVGEEHYEIAQRVKQTLQRYKELQDIIAILGLDELSEEDRLTVARARKIERFLSQPFFVAEVFTGSPGKYVGLAETIRGFQLIFSGELDGLPEQAFYLVGNIDEVTAKAMNLEMESKLKK.

172-179 contacts ATP; sequence GGAGVGKT.

Belongs to the ATPase alpha/beta chains family. In terms of assembly, F-type ATPases have 2 components, CF(1) - the catalytic core - and CF(0) - the membrane proton channel. CF(1) has five subunits: alpha(3), beta(3), gamma(1), delta(1), epsilon(1). CF(0) has four main subunits: a(1), b(1), b'(1) and c(9-12).

The protein localises to the plastid. Its subcellular location is the chloroplast thylakoid membrane. It carries out the reaction ATP + H2O + 4 H(+)(in) = ADP + phosphate + 5 H(+)(out). Its function is as follows. Produces ATP from ADP in the presence of a proton gradient across the membrane. The catalytic sites are hosted primarily by the beta subunits. This Beta vulgaris (Sugar beet) protein is ATP synthase subunit beta, chloroplastic.